Here is a 77-residue protein sequence, read N- to C-terminus: Large ribosomal subunit protein bL28 (77 aa).

Belongs to the bacterial ribosomal protein bL28 family.

The protein is Large ribosomal subunit protein bL28 of Polaromonas sp. (strain JS666 / ATCC BAA-500).